Here is a 271-residue protein sequence, read N- to C-terminus: uncharacterized protein (271 aa).

A signal peptide spans 1 to 22 (MARELLFLACAIVIADSWPAKA).

This is an uncharacterized protein from Sinorhizobium fredii (strain NBRC 101917 / NGR234).